A 345-amino-acid chain; its full sequence is Gibberellin receptor GID1A (345 aa).

N-acetylalanine is present on Ala-2. Residues 113–115 carry the Involved in the stabilization of the negatively charged intermediate by the formation of the oxyanion hole motif; that stretch reads HGG. Residues 115 to 116, Tyr-127, and Ser-191 each bind gibberellin A4; that span reads GS. Gibberellin A3-binding residues include Ser-116, Tyr-127, Ser-191, and Phe-238. Ser-191 is a catalytic residue. Asp-289 is a catalytic residue. Gly-320 contacts gibberellin A4. Gly-320 contacts gibberellin A3.

The protein belongs to the 'GDXG' lipolytic enzyme family. Interacts (via N-terminus) with the DELLA proteins GAI, RGA, RGL1, RGL2 and RGL3 (via N-terminus) in a GA-dependent manner. In terms of tissue distribution, widely expressed.

Its subcellular location is the nucleus. In terms of biological role, functions as a soluble gibberellin (GA) receptor. GA is an essential hormone that regulates growth and development in plants. Binds with high affinity the biologically active gibberellin GA4, but has no affinity for the biologically inactive GAs. In response to GA, interacts with specific DELLA proteins, known as repressors of GA-induced growth, and targets them for degradation via proteasome. Seems to be required for GA signaling that controls root growth, seed germination, stem elongation and flower development. Partially redundant with GID1B and GID1C. In Arabidopsis thaliana (Mouse-ear cress), this protein is Gibberellin receptor GID1A (GID1A).